A 156-amino-acid polypeptide reads, in one-letter code: CKLF-like MARVEL transmembrane domain-containing protein 5 (156 aa).

One can recognise an MARVEL domain in the interval 29–146 (FLSSLKGILL…DAFKIYRTEL (118 aa)). 4 consecutive transmembrane segments (helical) span residues 35-55 (GILLETELALTFIIFICFTAS), 56-76 (ISAYMAAALLEFLITLAFLFL), 93-113 (LDFLRCLSAIVIFLVVSFAAV), and 119-139 (AAIAAFVFGIILVSVFAYDAF).

It belongs to the chemokine-like factor family.

Its subcellular location is the membrane. The polypeptide is CKLF-like MARVEL transmembrane domain-containing protein 5 (Cmtm5) (Mus musculus (Mouse)).